The primary structure comprises 188 residues: Heterodisulfide reductase subunit C-like protein (188 aa).

2 4Fe-4S ferredoxin-type domains span residues 34 to 64 (KELG…FEWY) and 78 to 109 (DELL…FEVM). 8 residues coordinate [4Fe-4S] cluster: Cys-44, Cys-47, Cys-50, Cys-54, Cys-89, Cys-92, Cys-95, and Cys-99.

Belongs to the HdrC family. As to quaternary structure, the heterodisulfide reductase is composed of three subunits; HdlA, HdlB and HdlC. It forms a complex with the F420-non-reducing hydrogenase (Mvh), which provides the reducing equivalents to the heterodisulfide reductase.

Its subcellular location is the cytoplasm. Has oxidoreductase activity. The Hdl and Mvh subunits may together mediate electron transfer from hydrogen to an unidentified electron acceptor on the cytoplasmic side of the membrane. The sequence is that of Heterodisulfide reductase subunit C-like protein (hdlC) from Archaeoglobus profundus (strain DSM 5631 / JCM 9629 / NBRC 100127 / Av18).